The sequence spans 67 residues: Conotoxin ArMLKM-01 (67 aa).

The N-terminal stretch at 1–24 (MLKMEVVLFTFLVLFPLSTLQLET) is a signal peptide. The propeptide occupies 25–51 (DQPVERYVENKQDLNPDESRNFMLPIV). 3 disulfide bridges follow: Cys54-Cys65, Cys55-Cys63, and Cys58-Cys66.

This sequence belongs to the conotoxin M superfamily. Expressed by the venom duct.

The protein localises to the secreted. The sequence is that of Conotoxin ArMLKM-01 from Conus arenatus (Sand-dusted cone).